The following is a 218-amino-acid chain: tRNA (cytidine(56)-2'-O)-methyltransferase (218 aa).

Residues leucine 81, 106–110 (GAEKV), and 124–131 (IGNQPHSE) each bind S-adenosyl-L-methionine. The interval 170 to 218 (KVGEEGPSGGAPGVRAERGRGGRGEGVQGADEVRGHKRGATDRDLGDET) is disordered. Basic and acidic residues predominate over residues 200–218 (DEVRGHKRGATDRDLGDET).

This sequence belongs to the aTrm56 family. As to quaternary structure, homodimer.

It localises to the cytoplasm. It catalyses the reaction cytidine(56) in tRNA + S-adenosyl-L-methionine = 2'-O-methylcytidine(56) in tRNA + S-adenosyl-L-homocysteine + H(+). Specifically catalyzes the AdoMet-dependent 2'-O-ribose methylation of cytidine at position 56 in tRNAs. This Ignicoccus hospitalis (strain KIN4/I / DSM 18386 / JCM 14125) protein is tRNA (cytidine(56)-2'-O)-methyltransferase.